The primary structure comprises 414 residues: Enolase (414 aa).

Q162 contributes to the (2R)-2-phosphoglycerate binding site. E204 serves as the catalytic Proton donor. 3 residues coordinate Mg(2+): D239, E280, and D307. Positions 332, 361, 362, and 383 each coordinate (2R)-2-phosphoglycerate. K332 acts as the Proton acceptor in catalysis.

The protein belongs to the enolase family. Mg(2+) is required as a cofactor.

The protein localises to the cytoplasm. Its subcellular location is the secreted. It is found in the cell surface. The enzyme catalyses (2R)-2-phosphoglycerate = phosphoenolpyruvate + H2O. Its pathway is carbohydrate degradation; glycolysis; pyruvate from D-glyceraldehyde 3-phosphate: step 4/5. Catalyzes the reversible conversion of 2-phosphoglycerate (2-PG) into phosphoenolpyruvate (PEP). It is essential for the degradation of carbohydrates via glycolysis. This is Enolase from Campylobacter jejuni (strain RM1221).